The primary structure comprises 183 residues: MLQALLIFVLQIIYVPTLTIRTILLVKNQTRSAAGVGLLEGAIYIVSLGIVFQDLSNWMNIVAYVIGFSAGLLLGGYIENKLAIGYITYQVSLLDRCNELVNELRHFGFGVTVFEGEGINSIRYRLDIVAKRSREKELLEIINEIAPKAFMSSYEIRSFKGGYLTKAMKKRALLKKKKDEHAL.

Transmembrane regions (helical) follow at residues 6-26, 32-52, and 58-78; these read LIFVLQIIYVPTLTIRTILLV, SAAGVGLLEGAIYIVSLGIVF, and WMNIVAYVIGFSAGLLLGGYI.

Belongs to the UPF0316 family.

The protein localises to the cell membrane. This is UPF0316 protein BcerKBAB4_3093 from Bacillus mycoides (strain KBAB4) (Bacillus weihenstephanensis).